Reading from the N-terminus, the 476-residue chain is Proline--tRNA ligase 2 (476 aa).

Belongs to the class-II aminoacyl-tRNA synthetase family. ProS type 3 subfamily. Homodimer.

It is found in the cytoplasm. It catalyses the reaction tRNA(Pro) + L-proline + ATP = L-prolyl-tRNA(Pro) + AMP + diphosphate. In terms of biological role, catalyzes the attachment of proline to tRNA(Pro) in a two-step reaction: proline is first activated by ATP to form Pro-AMP and then transferred to the acceptor end of tRNA(Pro). This is Proline--tRNA ligase 2 from Bacillus cereus (strain ZK / E33L).